The following is a 382-amino-acid chain: UDP-4-amino-4-deoxy-L-arabinose--oxoglutarate aminotransferase (382 aa).

Position 182 is an N6-(pyridoxal phosphate)lysine (lysine 182).

It belongs to the DegT/DnrJ/EryC1 family. ArnB subfamily. As to quaternary structure, homodimer. Pyridoxal 5'-phosphate serves as cofactor.

The catalysed reaction is UDP-4-amino-4-deoxy-beta-L-arabinose + 2-oxoglutarate = UDP-beta-L-threo-pentopyranos-4-ulose + L-glutamate. It functions in the pathway nucleotide-sugar biosynthesis; UDP-4-deoxy-4-formamido-beta-L-arabinose biosynthesis; UDP-4-deoxy-4-formamido-beta-L-arabinose from UDP-alpha-D-glucuronate: step 2/3. Its pathway is bacterial outer membrane biogenesis; lipopolysaccharide biosynthesis. Its function is as follows. Catalyzes the conversion of UDP-4-keto-arabinose (UDP-Ara4O) to UDP-4-amino-4-deoxy-L-arabinose (UDP-L-Ara4N). The modified arabinose is attached to lipid A and is required for resistance to polymyxin and cationic antimicrobial peptides. This is UDP-4-amino-4-deoxy-L-arabinose--oxoglutarate aminotransferase from Yersinia enterocolitica serotype O:8 / biotype 1B (strain NCTC 13174 / 8081).